Here is a 385-residue protein sequence, read N- to C-terminus: MENKEVCLVCQDFSSGYHYGIPSCNGCKTFFRRTVMKKQKFVCQFDQNCPVDKSIRCACRFCRFEKCLKVGMDKTSLQASRDPIGYTKRNKKTLRHPMNELSGDESNSCTPDRQLSPLRSFENSLNFLAVRERSANELRMSSYLPKRSLKQALCSKPLINDPIFMSKHATVSPRHTFEKLRFITQDDYHYWHERDWFVLTEYAKTFKVFKNMPYHDKTELVCHAAIVIPVLNQVYNSPDYGLDTVVFPDGTYYDRTHEPTRPAGLNRKKYQVLDLVLKPFREMEINFNEFAAFKAITFLNPDADISLESKHAINEERVLITKQLYAYMVQKDGLEKAIYRFGRLILMGTSMSKMACESKEAVWIADFFENIGFTSFAKELIFGDH.

Positions 4 to 79 form a DNA-binding region, nuclear receptor; it reads KEVCLVCQDF…VGMDKTSLQA (76 aa). NR C4-type zinc fingers lie at residues 7–27 and 43–62; these read CLVC…CNGC and CQFD…CRFC. The disordered stretch occupies residues 81–110; sequence RDPIGYTKRNKKTLRHPMNELSGDESNSCT. The NR LBD domain maps to 145–384; it reads PKRSLKQALC…SFAKELIFGD (240 aa). Residues 373-384 are AF-2; sequence FTSFAKELIFGD.

The protein belongs to the nuclear hormone receptor family.

It is found in the nucleus. Probable transcription factor that acts in a feed-forward loop with nhr-10 to activate genes, including itself, involved in the vitamin B12-independent breakdown of the short-chain fatty acid propionate. This pathway is triggered in response to a diet low in vitamin B12, when canonical vitamin B12-dependent propionate breakdown cannot function; the resulting accumulation of propionate is probably sensed by nhr-68 and/or nhr-10. The polypeptide is Nuclear hormone receptor family member nhr-68 (Caenorhabditis elegans).